A 375-amino-acid polypeptide reads, in one-letter code: Peritrophin-48 (375 aa).

The first 20 residues, 1–20, serve as a signal peptide directing secretion; it reads MIIKTLLASVAIMLIATVNA. Chitin-binding type-2 domains follow at residues 25–83, 86–143, 153–210, 224–292, and 294–360; these read AKYC…NCIL, DNPC…SDDD, LNIC…MCER, ETLC…GCNR, and EYTT…ACQN. C60 and C73 form a disulfide bridge. Residue N117 is glycosylated (N-linked (GlcNAc...) asparagine). Cystine bridges form between C120-C133, C187-C200, C265-C278, and C330-C343. A glycan (N-linked (GlcNAc...) asparagine) is linked at N360.

In terms of processing, glycosylated. Cardia and midgut peritrophic membrane.

In terms of biological role, may bind chitin or related oligosaccharide structures. This Lucilia cuprina (Green bottle fly) protein is Peritrophin-48.